The following is a 146-amino-acid chain: 3-hydroxyacyl-[acyl-carrier-protein] dehydratase FabZ (146 aa).

Residue H48 is part of the active site.

Belongs to the thioester dehydratase family. FabZ subfamily.

Its subcellular location is the cytoplasm. It catalyses the reaction a (3R)-hydroxyacyl-[ACP] = a (2E)-enoyl-[ACP] + H2O. Involved in unsaturated fatty acids biosynthesis. Catalyzes the dehydration of short chain beta-hydroxyacyl-ACPs and long chain saturated and unsaturated beta-hydroxyacyl-ACPs. This Paracidovorax citrulli (strain AAC00-1) (Acidovorax citrulli) protein is 3-hydroxyacyl-[acyl-carrier-protein] dehydratase FabZ.